Here is a 920-residue protein sequence, read N- to C-terminus: Vacuolar membrane protease (920 aa).

Over 1–20 the chain is Cytoplasmic; it reads MASSRAQRFNPIAFTPWPVT. The chain crosses the membrane as a helical span at residues 21–41; it reads CITTIVYLALLIPILVINLVV. Residues 42–378 lie on the Vacuolar side of the membrane; the sequence is PSAPETNPKG…AFAVFRLHTL (337 aa). N-linked (GlcNAc...) asparagine glycosylation is found at Asn-53, Asn-116, and Asn-119. 2 residues coordinate Zn(2+): His-175 and Asp-187. The Proton acceptor role is filled by Glu-221. Glu-222 contacts Zn(2+). A glycan (N-linked (GlcNAc...) asparagine) is linked at Asn-238. Positions 247 and 306 each coordinate Zn(2+). The helical transmembrane segment at 379 to 399 threads the bilayer; sequence FAISVALLVIAPLVIFITSVI. At 400 to 433 the chain is on the cytoplasmic side; the sequence is LSKTDRMYLFSMSKSLEGTGDQVSLRGLRGFSRT. The chain crosses the membrane as a helical span at residues 434-454; it reads PIILVIATTIPICLAYLLEKV. The Vacuolar segment spans residues 455 to 463; that stretch reads NPYIVHSSQ. A helical transmembrane segment spans residues 464–484; that stretch reads FSVWSMMFSAWIFLAWFLACA. Over 485–495 the chain is Cytoplasmic; sequence ADFFRPSALHR. Residues 496-516 form a helical membrane-spanning segment; sequence AYSYTWIFVATWIMLVINTVY. Topologically, residues 517–520 are vacuolar; sequence ANQK. A helical membrane pass occupies residues 521–541; that stretch reads GIAAGYFLLFYFAGAFLATWI. Residues 542–659 are Cytoplasmic-facing; that stretch reads SYLELFALPR…TLPRWTWVLQ (118 aa). The segment at 556-605 is disordered; it reads ARQTTGRRPSSLSSRLLTSSADELRSNASPSTAEFPGAAGEDTDPTESTS. Over residues 559–575 the composition is skewed to low complexity; sequence TTGRRPSSLSSRLLTSS. The helical transmembrane segment at 660–680 threads the bilayer; it reads LLLLAPIVLILVGQLALFLTA. Topologically, residues 681–693 are vacuolar; it reads SMCQVGSDGVSTF. The chain crosses the membrane as a helical span at residues 694–714; the sequence is VVYLACAVFTTLLCIPLFPLI. Residues 715–720 are Cytoplasmic-facing; it reads HRFTYH. Residues 721–741 form a helical membrane-spanning segment; that stretch reads IPTFLFLVFIGTLIYNLVAFP. Over 742-920 the chain is Vacuolar; that stretch reads FSPANRLKTF…VEASHSFTIQ (179 aa). Asn-760, Asn-788, and Asn-832 each carry an N-linked (GlcNAc...) asparagine glycan.

The protein belongs to the peptidase M28 family. It depends on Zn(2+) as a cofactor.

Its subcellular location is the vacuole membrane. Its function is as follows. May be involved in vacuolar sorting and osmoregulation. This is Vacuolar membrane protease from Ajellomyces capsulatus (strain H143) (Darling's disease fungus).